The following is a 468-amino-acid chain: UDP-N-acetylmuramoylalanine--D-glutamate ligase (468 aa).

Position 117–123 (117–123) interacts with ATP; it reads GTDGKTT.

Belongs to the MurCDEF family.

The protein resides in the cytoplasm. The catalysed reaction is UDP-N-acetyl-alpha-D-muramoyl-L-alanine + D-glutamate + ATP = UDP-N-acetyl-alpha-D-muramoyl-L-alanyl-D-glutamate + ADP + phosphate + H(+). The protein operates within cell wall biogenesis; peptidoglycan biosynthesis. Functionally, cell wall formation. Catalyzes the addition of glutamate to the nucleotide precursor UDP-N-acetylmuramoyl-L-alanine (UMA). The chain is UDP-N-acetylmuramoylalanine--D-glutamate ligase from Chloroherpeton thalassium (strain ATCC 35110 / GB-78).